We begin with the raw amino-acid sequence, 237 residues long: Phosphoribosylaminoimidazole-succinocarboxamide synthase (237 aa).

It belongs to the SAICAR synthetase family.

It carries out the reaction 5-amino-1-(5-phospho-D-ribosyl)imidazole-4-carboxylate + L-aspartate + ATP = (2S)-2-[5-amino-1-(5-phospho-beta-D-ribosyl)imidazole-4-carboxamido]succinate + ADP + phosphate + 2 H(+). It participates in purine metabolism; IMP biosynthesis via de novo pathway; 5-amino-1-(5-phospho-D-ribosyl)imidazole-4-carboxamide from 5-amino-1-(5-phospho-D-ribosyl)imidazole-4-carboxylate: step 1/2. The polypeptide is Phosphoribosylaminoimidazole-succinocarboxamide synthase (Shigella dysenteriae serotype 1 (strain Sd197)).